The following is a 174-amino-acid chain: uncharacterized protein (174 aa).

This is an uncharacterized protein from Mycobacterium tuberculosis (strain CDC 1551 / Oshkosh).